Consider the following 175-residue polypeptide: CDP-archaeol synthase (175 aa).

4 helical membrane passes run 41–61 (GFFV…QLLE), 82–102 (TILI…MSFF), 122–142 (FVLG…AEQF), and 147–167 (IAVI…VGYF).

It belongs to the CDP-archaeol synthase family. It depends on Mg(2+) as a cofactor.

Its subcellular location is the cell membrane. It catalyses the reaction 2,3-bis-O-(geranylgeranyl)-sn-glycerol 1-phosphate + CTP + H(+) = CDP-2,3-bis-O-(geranylgeranyl)-sn-glycerol + diphosphate. The protein operates within membrane lipid metabolism; glycerophospholipid metabolism. Functionally, catalyzes the formation of CDP-2,3-bis-(O-geranylgeranyl)-sn-glycerol (CDP-archaeol) from 2,3-bis-(O-geranylgeranyl)-sn-glycerol 1-phosphate (DGGGP) and CTP. This reaction is the third ether-bond-formation step in the biosynthesis of archaeal membrane lipids. The chain is CDP-archaeol synthase from Methanococcoides burtonii (strain DSM 6242 / NBRC 107633 / OCM 468 / ACE-M).